Consider the following 366-residue polypeptide: UDP-N-acetylglucosamine--N-acetylmuramyl-(pentapeptide) pyrophosphoryl-undecaprenol N-acetylglucosamine transferase (366 aa).

Residues 17–19, Asn129, Arg169, Ser195, Ile251, 270–275, and Gln296 contribute to the UDP-N-acetyl-alpha-D-glucosamine site; these read TGG and ALTVSE.

This sequence belongs to the glycosyltransferase 28 family. MurG subfamily.

The protein resides in the cell inner membrane. The catalysed reaction is di-trans,octa-cis-undecaprenyl diphospho-N-acetyl-alpha-D-muramoyl-L-alanyl-D-glutamyl-meso-2,6-diaminopimeloyl-D-alanyl-D-alanine + UDP-N-acetyl-alpha-D-glucosamine = di-trans,octa-cis-undecaprenyl diphospho-[N-acetyl-alpha-D-glucosaminyl-(1-&gt;4)]-N-acetyl-alpha-D-muramoyl-L-alanyl-D-glutamyl-meso-2,6-diaminopimeloyl-D-alanyl-D-alanine + UDP + H(+). Its pathway is cell wall biogenesis; peptidoglycan biosynthesis. In terms of biological role, cell wall formation. Catalyzes the transfer of a GlcNAc subunit on undecaprenyl-pyrophosphoryl-MurNAc-pentapeptide (lipid intermediate I) to form undecaprenyl-pyrophosphoryl-MurNAc-(pentapeptide)GlcNAc (lipid intermediate II). This is UDP-N-acetylglucosamine--N-acetylmuramyl-(pentapeptide) pyrophosphoryl-undecaprenol N-acetylglucosamine transferase from Shewanella denitrificans (strain OS217 / ATCC BAA-1090 / DSM 15013).